The chain runs to 206 residues: Large ribosomal subunit protein bL25 (206 aa).

Belongs to the bacterial ribosomal protein bL25 family. CTC subfamily. In terms of assembly, part of the 50S ribosomal subunit; part of the 5S rRNA/L5/L18/L25 subcomplex. Contacts the 5S rRNA. Binds to the 5S rRNA independently of L5 and L18.

This is one of the proteins that binds to the 5S RNA in the ribosome where it forms part of the central protuberance. In Ralstonia nicotianae (strain ATCC BAA-1114 / GMI1000) (Ralstonia solanacearum), this protein is Large ribosomal subunit protein bL25.